Reading from the N-terminus, the 515-residue chain is Phenylalanine--tRNA ligase beta subunit (515 aa).

The 72-residue stretch at 263 to 334 (HEYVKIYVDE…IVMGYNQMPR (72 aa)) folds into the B5 domain. Residues Asn312, Asp318, Glu321, and Asp322 each coordinate Mg(2+).

The protein belongs to the phenylalanyl-tRNA synthetase beta subunit family. Type 2 subfamily. As to quaternary structure, tetramer of two alpha and two beta subunits. The cofactor is Mg(2+).

It is found in the cytoplasm. It carries out the reaction tRNA(Phe) + L-phenylalanine + ATP = L-phenylalanyl-tRNA(Phe) + AMP + diphosphate + H(+). This chain is Phenylalanine--tRNA ligase beta subunit, found in Pyrobaculum aerophilum (strain ATCC 51768 / DSM 7523 / JCM 9630 / CIP 104966 / NBRC 100827 / IM2).